Reading from the N-terminus, the 442-residue chain is Putative neutral sphingomyelinase (442 aa).

Glu-46 contributes to the Mg(2+) binding site. Residue His-264 is the Proton acceptor of the active site. Residues 309–330 (ALTGEDDQSSQHQPEIQCNGSS) form a disordered region. Polar residues predominate over residues 318-330 (SQHQPEIQCNGSS). The next 2 membrane-spanning stretches (helical) occupy residues 362–384 (RILY…EFTA) and 391–413 (IFLL…ASIW).

It belongs to the neutral sphingomyelinase family.

The protein resides in the membrane. It catalyses the reaction a sphingomyelin + H2O = phosphocholine + an N-acylsphing-4-enine + H(+). It functions in the pathway lipid metabolism; sphingolipid metabolism. The sequence is that of Putative neutral sphingomyelinase from Drosophila melanogaster (Fruit fly).